The primary structure comprises 282 residues: Aquaporin PIP2-7 (282 aa).

The disordered stretch occupies residues 1–21 (MSKEVSVEGEQPPVKDYTDPP). The Cytoplasmic segment spans residues 1-38 (MSKEVSVEGEQPPVKDYTDPPPEPLLNFGELRLWSFYR). Residues 39 to 59 (ALIAEFVATLLFLYVTIATVI) traverse the membrane as a helical segment. The Extracellular segment spans residues 60–71 (GHKEQNAADQCS). A helical membrane pass occupies residues 72–92 (GVGLLGIAWAFGGMIFILVYC). Topologically, residues 93-120 (TAGISGGHINPAVTLGLFLARKVSLIRA) are cytoplasmic. Residues 102–104 (NPA) carry the NPA 1 motif. A helical membrane pass occupies residues 121-141 (LLYMVAQCLGAIVGVGIVKGI). The Extracellular segment spans residues 142 to 162 (MKHQYNSLGGGANVVAAGYSK). The chain crosses the membrane as a helical span at residues 163-183 (GTALGAEIIGTFVLVYTVFSA). The Cytoplasmic portion of the chain corresponds to 184-196 (TDPKRSARDSHVP). A helical membrane pass occupies residues 197 to 217 (VLAPLPIGFAVFMVHLATIPI). Topologically, residues 218 to 244 (TGTGINPARSLGAAVIYNQDKPWDDHW) are extracellular. The short motif at 223 to 225 (NPA) is the NPA 2 element. Residues 245 to 265 (ILWVGPFVGALAAAAYHQYIL) form a helical membrane-spanning segment. Over 266 to 282 (RAAAIKALGSFRSNPSN) the chain is Cytoplasmic.

It belongs to the MIP/aquaporin (TC 1.A.8) family. PIP (TC 1.A.8.11) subfamily. Expressed in roots, leaves and fruits.

Its subcellular location is the cell membrane. Functionally, water channel required to facilitate the transport of water across cell membrane; mercury-insensitive. Contributes to the tolerance to multiple abiotic stresses including salt (NaCl), cold and water deprivation, by modulating cytosolic K(+)/Na(+) ratio, maintaining osmotic balance, and reducing membrane injury (e.g. oxidative injury). Also regulates the expression of abscisic acid (ABA)- biosynthetic and -responsive genes during dehydration and salt stresses. The sequence is that of Aquaporin PIP2-7 from Musa acuminata (Banana).